A 142-amino-acid polypeptide reads, in one-letter code: Small ribosomal subunit protein uS12 (142 aa).

Residues 1–30 (MGKTHGMGAARKLKSHRRTQRWADKSYKKS) are disordered. The span at 11–20 (RKLKSHRRTQ) shows a compositional bias: basic residues. The segment covering 21–30 (RWADKSYKKS) has biased composition (basic and acidic residues). Hydroxyproline is present on Pro61.

The protein belongs to the universal ribosomal protein uS12 family.

The protein is Small ribosomal subunit protein uS12 (RPS23) of Euphorbia esula (Leafy spurge).